The following is a 377-amino-acid chain: Lipoyl synthase, mitochondrial (377 aa).

[4Fe-4S] cluster is bound by residues Cys98, Cys103, Cys109, Cys128, Cys132, Cys135, and Ser343. Residues 113–332 (KKSEATATIM…RDTALDMGFL (220 aa)) enclose the Radical SAM core domain.

The protein belongs to the radical SAM superfamily. Lipoyl synthase family. [4Fe-4S] cluster serves as cofactor.

The protein resides in the mitochondrion. It catalyses the reaction [[Fe-S] cluster scaffold protein carrying a second [4Fe-4S](2+) cluster] + N(6)-octanoyl-L-lysyl-[protein] + 2 oxidized [2Fe-2S]-[ferredoxin] + 2 S-adenosyl-L-methionine + 4 H(+) = [[Fe-S] cluster scaffold protein] + N(6)-[(R)-dihydrolipoyl]-L-lysyl-[protein] + 4 Fe(3+) + 2 hydrogen sulfide + 2 5'-deoxyadenosine + 2 L-methionine + 2 reduced [2Fe-2S]-[ferredoxin]. Its pathway is protein modification; protein lipoylation via endogenous pathway; protein N(6)-(lipoyl)lysine from octanoyl-[acyl-carrier-protein]: step 2/2. In terms of biological role, catalyzes the radical-mediated insertion of two sulfur atoms into the C-6 and C-8 positions of the octanoyl moiety bound to the lipoyl domains of lipoate-dependent enzymes, thereby converting the octanoylated domains into lipoylated derivatives. The chain is Lipoyl synthase, mitochondrial from Candida tropicalis (strain ATCC MYA-3404 / T1) (Yeast).